The sequence spans 183 residues: Large ribosomal subunit protein uL6 (183 aa).

Belongs to the universal ribosomal protein uL6 family. In terms of assembly, part of the 50S ribosomal subunit.

Its function is as follows. This protein binds to the 23S rRNA, and is important in its secondary structure. It is located near the subunit interface in the base of the L7/L12 stalk, and near the tRNA binding site of the peptidyltransferase center. The polypeptide is Large ribosomal subunit protein uL6 (Chlamydia pneumoniae (Chlamydophila pneumoniae)).